We begin with the raw amino-acid sequence, 283 residues long: Bifunctional protein FolD (283 aa).

Residues 166 to 168 (GQS), Ser191, and Ile232 contribute to the NADP(+) site.

Belongs to the tetrahydrofolate dehydrogenase/cyclohydrolase family. In terms of assembly, homodimer.

It catalyses the reaction (6R)-5,10-methylene-5,6,7,8-tetrahydrofolate + NADP(+) = (6R)-5,10-methenyltetrahydrofolate + NADPH. The catalysed reaction is (6R)-5,10-methenyltetrahydrofolate + H2O = (6R)-10-formyltetrahydrofolate + H(+). The protein operates within one-carbon metabolism; tetrahydrofolate interconversion. Its function is as follows. Catalyzes the oxidation of 5,10-methylenetetrahydrofolate to 5,10-methenyltetrahydrofolate and then the hydrolysis of 5,10-methenyltetrahydrofolate to 10-formyltetrahydrofolate. The sequence is that of Bifunctional protein FolD from Laribacter hongkongensis (strain HLHK9).